A 115-amino-acid polypeptide reads, in one-letter code: MTWLLLCLLAQYENGGKVLALSSSAKPYKTSVRFDPKTAHPNLVVSQDKKTVTWVQEAQSVPDNPERFNSTPCLLGSPGFTSGKHYWEVEYGNQRELAAGVARKSVKRKDHLRLT.

Residues 1–15 (MTWLLLCLLAQYENG) form the signal peptide. Residues 22-115 (SSSAKPYKTS…VKRKDHLRLT (94 aa)) enclose the B30.2/SPRY domain.

It belongs to the ohanin/vespryn family. As to expression, expressed by the venom gland.

It localises to the secreted. Functionally, neurotoxin that produces dose-dependent hypolocomotion and hyperalgesia in mice. May directly act on the central nervous system, as it is 6500-fold more potent when administered intracerebroventricularly than intraperitoneal. This Pogona barbata (Bearded dragon) protein is Vespryn.